The following is a 315-amino-acid chain: MTIDSGFNHITVLLDEAVEALALRADGCYLDGTFGRGGHSRLILSKLGPQGRLLGFDKDPQAIATGQALAAEDGRFVIVQRSFAELGAEVAERGLAGKVSGILLDLGVSSPQLDDPERGFSFLNDGPLDMRMNPDQGISAAEFIATAPVEEIARVFKEYGEERFAGRMARAVVERREKQPFTRTADLAEVLKVANPAWEKGKNPATRAFQGLRIHVNNELGDLEAGLEAALDALEVGGRLAVISFHSLEDRIVKLFMRKLVKGEADNLPRNLPVQHKVFEPKIRLIGKAQFASEAELKANPRSRSAVMRVAEKLR.

S-adenosyl-L-methionine-binding positions include 37–39 (GGH), D57, F83, D105, and Q112.

This sequence belongs to the methyltransferase superfamily. RsmH family.

It localises to the cytoplasm. It carries out the reaction cytidine(1402) in 16S rRNA + S-adenosyl-L-methionine = N(4)-methylcytidine(1402) in 16S rRNA + S-adenosyl-L-homocysteine + H(+). In terms of biological role, specifically methylates the N4 position of cytidine in position 1402 (C1402) of 16S rRNA. This Pseudomonas putida (strain W619) protein is Ribosomal RNA small subunit methyltransferase H.